A 394-amino-acid polypeptide reads, in one-letter code: 1-deoxy-D-xylulose 5-phosphate reductoisomerase (394 aa).

NADPH is bound by residues Thr-12, Gly-13, Ser-14, Ile-15, Gly-38, Asn-41, and Asn-132. Lys-133 is a binding site for 1-deoxy-D-xylulose 5-phosphate. Glu-134 serves as a coordination point for NADPH. Asp-156 serves as a coordination point for Mn(2+). 1-deoxy-D-xylulose 5-phosphate is bound by residues Ser-157, Glu-158, Ser-182, and His-205. Residue Glu-158 coordinates Mn(2+). Gly-211 provides a ligand contact to NADPH. 1-deoxy-D-xylulose 5-phosphate contacts are provided by Ser-218, Asn-223, Lys-224, and Glu-227. Glu-227 lines the Mn(2+) pocket.

This sequence belongs to the DXR family. Mg(2+) is required as a cofactor. The cofactor is Mn(2+).

It catalyses the reaction 2-C-methyl-D-erythritol 4-phosphate + NADP(+) = 1-deoxy-D-xylulose 5-phosphate + NADPH + H(+). It functions in the pathway isoprenoid biosynthesis; isopentenyl diphosphate biosynthesis via DXP pathway; isopentenyl diphosphate from 1-deoxy-D-xylulose 5-phosphate: step 1/6. In terms of biological role, catalyzes the NADPH-dependent rearrangement and reduction of 1-deoxy-D-xylulose-5-phosphate (DXP) to 2-C-methyl-D-erythritol 4-phosphate (MEP). The sequence is that of 1-deoxy-D-xylulose 5-phosphate reductoisomerase from Paenarthrobacter aurescens (strain TC1).